We begin with the raw amino-acid sequence, 431 residues long: Tyrosine--tRNA ligase (431 aa).

Tyr34 contributes to the L-tyrosine binding site. The 'HIGH' region signature appears at 39-48; that stretch reads PTADSLHIGH. L-tyrosine contacts are provided by Tyr171 and Gln175. The 'KMSKS' region motif lies at 231–235; it reads KFGKT. Residue Lys234 coordinates ATP. An S4 RNA-binding domain is found at 353–422; sequence INVVEALVKT…GKYTILRRGK (70 aa).

The protein belongs to the class-I aminoacyl-tRNA synthetase family. TyrS type 1 subfamily. As to quaternary structure, homodimer.

Its subcellular location is the cytoplasm. The catalysed reaction is tRNA(Tyr) + L-tyrosine + ATP = L-tyrosyl-tRNA(Tyr) + AMP + diphosphate + H(+). Its function is as follows. Catalyzes the attachment of tyrosine to tRNA(Tyr) in a two-step reaction: tyrosine is first activated by ATP to form Tyr-AMP and then transferred to the acceptor end of tRNA(Tyr). The sequence is that of Tyrosine--tRNA ligase from Neisseria meningitidis serogroup C (strain 053442).